We begin with the raw amino-acid sequence, 130 residues long: Small ribosomal subunit protein uS8 (130 aa).

K88 bears the N6-succinyllysine mark.

The protein belongs to the universal ribosomal protein uS8 family. As to quaternary structure, component of the small ribosomal subunit. Part of the small subunit (SSU) processome, composed of more than 70 proteins and the RNA chaperone small nucleolar RNA (snoRNA) U3.

Its subcellular location is the cytoplasm. It is found in the nucleus. It localises to the nucleolus. Its function is as follows. Component of the small ribosomal subunit. The ribosome is a large ribonucleoprotein complex responsible for the synthesis of proteins in the cell. Part of the small subunit (SSU) processome, first precursor of the small eukaryotic ribosomal subunit. During the assembly of the SSU processome in the nucleolus, many ribosome biogenesis factors, an RNA chaperone and ribosomal proteins associate with the nascent pre-rRNA and work in concert to generate RNA folding, modifications, rearrangements and cleavage as well as targeted degradation of pre-ribosomal RNA by the RNA exosome. Required for proper erythropoiesis. The protein is Small ribosomal subunit protein uS8 (Rps15a) of Mus musculus (Mouse).